Reading from the N-terminus, the 347-residue chain is Dihydroorotate dehydrogenase (quinone) (347 aa).

Residues 62–66 and A86 each bind FMN; that span reads AGLDK. Substrate is bound at residue K66. 111–115 serves as a coordination point for substrate; the sequence is NRMGF. FMN is bound by residues N139 and N172. N172 provides a ligand contact to substrate. The active-site Nucleophile is the S175. N177 lines the substrate pocket. Residues K217 and T245 each coordinate FMN. Residue 246–247 participates in substrate binding; sequence NT. Residues G268, G297, and 318–319 each bind FMN; that span reads YT.

It belongs to the dihydroorotate dehydrogenase family. Type 2 subfamily. As to quaternary structure, monomer. It depends on FMN as a cofactor.

The protein localises to the cell membrane. The enzyme catalyses (S)-dihydroorotate + a quinone = orotate + a quinol. It participates in pyrimidine metabolism; UMP biosynthesis via de novo pathway; orotate from (S)-dihydroorotate (quinone route): step 1/1. Catalyzes the conversion of dihydroorotate to orotate with quinone as electron acceptor. This chain is Dihydroorotate dehydrogenase (quinone), found in Coxiella burnetii (strain CbuK_Q154) (Coxiella burnetii (strain Q154)).